The following is a 169-amino-acid chain: Cilia- and flagella-associated protein HOATZ (169 aa).

3 disordered regions span residues 1–21 (METG…MCPP), 52–89 (SQLV…LASN), and 144–169 (KAKE…KTLD). The segment covering 75 to 89 (SENSHSSQSFHLASN) has biased composition (polar residues).

The protein belongs to the HOATZ family.

Its subcellular location is the cytoplasm. The protein resides in the cell projection. The protein localises to the cilium. Functionally, required for motile ciliogenesis and flagellar genesis by mediating the maturation of the glycolytic enzyme ENO4. The sequence is that of Cilia- and flagella-associated protein HOATZ from Homo sapiens (Human).